Here is a 182-residue protein sequence, read N- to C-terminus: Large ribosomal subunit protein uL5 (182 aa).

Belongs to the universal ribosomal protein uL5 family. Part of the 50S ribosomal subunit; part of the 5S rRNA/L5/L18/L25 subcomplex. Contacts the 5S rRNA and the P site tRNA. Forms a bridge to the 30S subunit in the 70S ribosome.

In terms of biological role, this is one of the proteins that bind and probably mediate the attachment of the 5S RNA into the large ribosomal subunit, where it forms part of the central protuberance. In the 70S ribosome it contacts protein S13 of the 30S subunit (bridge B1b), connecting the 2 subunits; this bridge is implicated in subunit movement. Contacts the P site tRNA; the 5S rRNA and some of its associated proteins might help stabilize positioning of ribosome-bound tRNAs. The chain is Large ribosomal subunit protein uL5 from Borreliella burgdorferi (strain ATCC 35210 / DSM 4680 / CIP 102532 / B31) (Borrelia burgdorferi).